The following is a 172-amino-acid chain: 3-hydroxydecanoyl-[acyl-carrier-protein] dehydratase (172 aa).

The active site involves histidine 71.

Belongs to the thioester dehydratase family. FabA subfamily. Homodimer.

Its subcellular location is the cytoplasm. It catalyses the reaction a (3R)-hydroxyacyl-[ACP] = a (2E)-enoyl-[ACP] + H2O. The enzyme catalyses (3R)-hydroxydecanoyl-[ACP] = (2E)-decenoyl-[ACP] + H2O. It carries out the reaction (2E)-decenoyl-[ACP] = (3Z)-decenoyl-[ACP]. It participates in lipid metabolism; fatty acid biosynthesis. Functionally, necessary for the introduction of cis unsaturation into fatty acids. Catalyzes the dehydration of (3R)-3-hydroxydecanoyl-ACP to E-(2)-decenoyl-ACP and then its isomerization to Z-(3)-decenoyl-ACP. Can catalyze the dehydratase reaction for beta-hydroxyacyl-ACPs with saturated chain lengths up to 16:0, being most active on intermediate chain length. The chain is 3-hydroxydecanoyl-[acyl-carrier-protein] dehydratase from Yersinia pseudotuberculosis serotype O:1b (strain IP 31758).